Here is a 257-residue protein sequence, read N- to C-terminus: Transmembrane protein C257L (257 aa).

The next 2 membrane-spanning stretches (helical) occupy residues 123 to 143 (LELL…FTAL) and 163 to 183 (MMIF…YVLV).

This sequence belongs to the asfivirus C257R family.

It is found in the host membrane. The protein resides in the virion. This chain is Transmembrane protein C257L, found in African swine fever virus (isolate Warthog/Namibia/Wart80/1980) (ASFV).